A 49-amino-acid polypeptide reads, in one-letter code: Large ribosomal subunit protein eL40 (49 aa).

Belongs to the eukaryotic ribosomal protein eL40 family.

This is Large ribosomal subunit protein eL40 from Methanococcoides burtonii (strain DSM 6242 / NBRC 107633 / OCM 468 / ACE-M).